A 751-amino-acid chain; its full sequence is Ecdysteroid-phosphate phosphatase (751 aa).

The UBA domain occupies 16-60 (CISKQHLTPLQTLLQMGFPRHRAEKALASTGNRGVQIASDWLLAH). Positions 271 to 336 (ATKQVQKVVY…PVNYTERTAE (66 aa)) constitute an SH3 domain. Disordered regions lie at residues 367–394 (GRSI…FEES) and 458–484 (EPPA…PGSL). Residues 466–479 (RPDDTLSVHSDHSL) show a composition bias toward basic and acidic residues. Residues 490–751 (KNRKIYIMRH…RFEWNALSAT (262 aa)) form a phosphatase-like region. The active site involves Arg-498. The active-site Tele-phosphohistidine intermediate is His-499. Residue His-681 is part of the active site.

Its subcellular location is the cytoplasm. It is found in the cytosol. The protein resides in the nucleus. It carries out the reaction ecdysone 22-phosphate + H2O = ecdysone + phosphate. The enzyme catalyses 20-hydroxyecdysone 22-phosphate + H2O = 20-hydroxyecdysone + phosphate. It catalyses the reaction 2-deoxyecdysone 22-phosphate + H2O = 2-deoxyecdysone + phosphate. Functionally, steroid phosphatase that dephosphorylates ecdysteroids such as ecdysone 22-phosphate (E22P), 3-epi-ecdysone 22-phosphate (E22P) and 3-epi-ecdysone 2-phosphate (E2P). Likely catalyzes the conversion of inactive phosphorylated ecdysteroids into their active forms. Shows high activity towards ecdysone 22-phosphate (E22P), but is also significantly active against 3-epi-ecdysone 22-phosphate (E22P) and 3-epi-ecdysone 2-phosphate (E2P). Also displays acid phosphatase activity towards 4-nitrophenyl phosphate (pNNP) in vitro. Has no activity towards 3-epi-ecdysone 3-phosphate (E3P). In Drosophila melanogaster (Fruit fly), this protein is Ecdysteroid-phosphate phosphatase.